The chain runs to 244 residues: UDP-2,3-diacylglucosamine hydrolase (244 aa).

Mn(2+) is bound by residues D8, H10, D41, N79, and H114. Residue 79–80 (NR) coordinates substrate. Substrate is bound by residues D122, K164, K167, and H195. Mn(2+) is bound by residues H195 and H197.

It belongs to the LpxH family. Mn(2+) serves as cofactor.

It localises to the cell inner membrane. It catalyses the reaction UDP-2-N,3-O-bis[(3R)-3-hydroxytetradecanoyl]-alpha-D-glucosamine + H2O = 2-N,3-O-bis[(3R)-3-hydroxytetradecanoyl]-alpha-D-glucosaminyl 1-phosphate + UMP + 2 H(+). It participates in glycolipid biosynthesis; lipid IV(A) biosynthesis; lipid IV(A) from (3R)-3-hydroxytetradecanoyl-[acyl-carrier-protein] and UDP-N-acetyl-alpha-D-glucosamine: step 4/6. Functionally, hydrolyzes the pyrophosphate bond of UDP-2,3-diacylglucosamine to yield 2,3-diacylglucosamine 1-phosphate (lipid X) and UMP by catalyzing the attack of water at the alpha-P atom. Involved in the biosynthesis of lipid A, a phosphorylated glycolipid that anchors the lipopolysaccharide to the outer membrane of the cell. The chain is UDP-2,3-diacylglucosamine hydrolase from Vibrio atlanticus (strain LGP32) (Vibrio splendidus (strain Mel32)).